We begin with the raw amino-acid sequence, 147 residues long: Large ribosomal subunit protein bL9 (147 aa).

This sequence belongs to the bacterial ribosomal protein bL9 family.

In terms of biological role, binds to the 23S rRNA. The protein is Large ribosomal subunit protein bL9 of Halothermothrix orenii (strain H 168 / OCM 544 / DSM 9562).